The following is a 420-amino-acid chain: MNIIDELQWRGLINQSTDIDALREACEKPITLYCGFDPTGDSLHAGHLVPMIMLRRFQEAGHRPITLAGGATGFIGDPRDVGERSMLSQDTIEHNLESIKKQLRSFVRFDGDSPAIMVNNADWTMSMSVVDFLRDVGKNFSLNTMLDRETVKRRLETDGISYTEFSYMLLQANDFVQLNREYDCVLQIGGGDQWGNIVSGVDLNRRVSGTKTHALTVPLVTDAQGQKFGKSTGGGKLWLDPEKTSAYSWYQYFLNAGDSVVIDYLRWFTFLTQEEIAELETEVRERPHLRAAQRRLAQEMTDLVHGHDATVSVELAAQALFGRASLQDLDEATLDGALSETVIFEVPAGESPTIIDLLIGAGLVDSKGAARRTIKEGGAYVNNERIESEDWQPTDDVLLHGAWLVLRKGKKNFAGVKYSA.

Tyr33 serves as a coordination point for L-tyrosine. A 'HIGH' region motif is present at residues 38–47 (PTGDSLHAGH). Residues Tyr167 and Gln171 each contribute to the L-tyrosine site. The 'KMSKS' region motif lies at 227-231 (KFGKS). Lys230 provides a ligand contact to ATP. In terms of domain architecture, S4 RNA-binding spans 352–418 (PTIIDLLIGA…GKKNFAGVKY (67 aa)).

It belongs to the class-I aminoacyl-tRNA synthetase family. TyrS type 1 subfamily. Homodimer.

It localises to the cytoplasm. The enzyme catalyses tRNA(Tyr) + L-tyrosine + ATP = L-tyrosyl-tRNA(Tyr) + AMP + diphosphate + H(+). Functionally, catalyzes the attachment of tyrosine to tRNA(Tyr) in a two-step reaction: tyrosine is first activated by ATP to form Tyr-AMP and then transferred to the acceptor end of tRNA(Tyr). The polypeptide is Tyrosine--tRNA ligase (Corynebacterium diphtheriae (strain ATCC 700971 / NCTC 13129 / Biotype gravis)).